An 83-amino-acid polypeptide reads, in one-letter code: MNPSPRGKKRVFHRRKYCRFCADSSLPIDYKNPKSLKSFITERGKIIPRRISGTCAKHQRAITREIKRARTIALLPYVGKPDN.

Belongs to the bacterial ribosomal protein bS18 family. As to quaternary structure, part of the 30S ribosomal subunit. Forms a tight heterodimer with protein bS6.

Its function is as follows. Binds as a heterodimer with protein bS6 to the central domain of the 16S rRNA, where it helps stabilize the platform of the 30S subunit. The polypeptide is Small ribosomal subunit protein bS18 (Desulfosudis oleivorans (strain DSM 6200 / JCM 39069 / Hxd3) (Desulfococcus oleovorans)).